The chain runs to 398 residues: 1-deoxy-D-xylulose 5-phosphate reductoisomerase (398 aa).

5 residues coordinate NADPH: Thr11, Gly12, Ser13, Ile14, and Asn125. Lys126 is a 1-deoxy-D-xylulose 5-phosphate binding site. NADPH is bound at residue Glu127. Asp151 contributes to the Mn(2+) binding site. The 1-deoxy-D-xylulose 5-phosphate site is built by Ser152, Glu153, Ser186, and His209. Residue Glu153 coordinates Mn(2+). NADPH is bound at residue Gly215. 1-deoxy-D-xylulose 5-phosphate-binding residues include Ser222, Asn227, Lys228, and Glu231. Glu231 serves as a coordination point for Mn(2+).

Belongs to the DXR family. Requires Mg(2+) as cofactor. The cofactor is Mn(2+).

The enzyme catalyses 2-C-methyl-D-erythritol 4-phosphate + NADP(+) = 1-deoxy-D-xylulose 5-phosphate + NADPH + H(+). Its pathway is isoprenoid biosynthesis; isopentenyl diphosphate biosynthesis via DXP pathway; isopentenyl diphosphate from 1-deoxy-D-xylulose 5-phosphate: step 1/6. Functionally, catalyzes the NADPH-dependent rearrangement and reduction of 1-deoxy-D-xylulose-5-phosphate (DXP) to 2-C-methyl-D-erythritol 4-phosphate (MEP). This Acinetobacter baumannii (strain ACICU) protein is 1-deoxy-D-xylulose 5-phosphate reductoisomerase.